A 233-amino-acid polypeptide reads, in one-letter code: Adenosine 5'-phosphosulfate reductase (233 aa).

[4Fe-4S] cluster contacts are provided by Cys-120, Cys-121, Cys-203, and Cys-206. Cys-229 functions as the Nucleophile; cysteine thiosulfonate intermediate in the catalytic mechanism.

Belongs to the PAPS reductase family. CysH subfamily. [4Fe-4S] cluster serves as cofactor.

The protein localises to the cytoplasm. The catalysed reaction is [thioredoxin]-disulfide + sulfite + AMP + 2 H(+) = adenosine 5'-phosphosulfate + [thioredoxin]-dithiol. It participates in sulfur metabolism; hydrogen sulfide biosynthesis; sulfite from sulfate. Catalyzes the formation of sulfite from adenosine 5'-phosphosulfate (APS) using thioredoxin as an electron donor. In Bacillus velezensis (strain DSM 23117 / BGSC 10A6 / LMG 26770 / FZB42) (Bacillus amyloliquefaciens subsp. plantarum), this protein is Adenosine 5'-phosphosulfate reductase.